We begin with the raw amino-acid sequence, 435 residues long: Probable xyloglucan galactosyltransferase GT19 (435 aa).

Residues 1–6 (MASKST) lie on the Cytoplasmic side of the membrane. The chain crosses the membrane as a helical; Signal-anchor for type II membrane protein span at residues 7–23 (VTTLTIFFFFFFFFIEP). The Lumenal portion of the chain corresponds to 24-435 (KVQSQQISAV…GVLDRIISRV (412 aa)). 3 N-linked (GlcNAc...) asparagine glycosylation sites follow: Asn-140, Asn-203, and Asn-277.

This sequence belongs to the glycosyltransferase 47 family. Expressed in roots, hypocotyls, cotyledons, leaves, stems, stamens and pollen grains.

Its subcellular location is the golgi apparatus membrane. Functions in xyloglucan synthesis by adding side chains to the xylosylated glucan backbone. Involved in the galactosylation of hemicellulose xyloglucan. In Arabidopsis thaliana (Mouse-ear cress), this protein is Probable xyloglucan galactosyltransferase GT19.